Reading from the N-terminus, the 85-residue chain is Small ribosomal subunit protein bS18 (85 aa).

Belongs to the bacterial ribosomal protein bS18 family. In terms of assembly, part of the 30S ribosomal subunit. Forms a tight heterodimer with protein bS6.

In terms of biological role, binds as a heterodimer with protein bS6 to the central domain of the 16S rRNA, where it helps stabilize the platform of the 30S subunit. The chain is Small ribosomal subunit protein bS18 from Helicobacter acinonychis (strain Sheeba).